The chain runs to 566 residues: Membrane protein insertase YidC (566 aa).

The next 5 helical transmembrane spans lie at 3-23 (IKRI…FNAW), 346-366 (GWLW…HAVV), 369-389 (WGWS…WFSA), 436-456 (GGCL…YVII), and 509-529 (MWIL…GLVL).

Belongs to the OXA1/ALB3/YidC family. Type 1 subfamily. In terms of assembly, interacts with the Sec translocase complex via SecD. Specifically interacts with transmembrane segments of nascent integral membrane proteins during membrane integration.

Its subcellular location is the cell inner membrane. Functionally, required for the insertion and/or proper folding and/or complex formation of integral membrane proteins into the membrane. Involved in integration of membrane proteins that insert both dependently and independently of the Sec translocase complex, as well as at least some lipoproteins. Aids folding of multispanning membrane proteins. The sequence is that of Membrane protein insertase YidC from Coxiella burnetii (strain CbuK_Q154) (Coxiella burnetii (strain Q154)).